The chain runs to 946 residues: DNA ligase 4 (946 aa).

ATP contacts are provided by Glu295, Lys297, Arg302, Glu355, Phe397, Glu457, Lys462, Lys479, and Lys481. The active-site N6-AMP-lysine intermediate is the Lys297. Glu355 serves as a coordination point for Mg(2+). Position 457 (Glu457) interacts with Mg(2+). 2 BRCT domains span residues 688 to 787 and 845 to 945; these read HRSD…PSHC and VPHF…NYRL.

The protein belongs to the ATP-dependent DNA ligase family. It depends on Mg(2+) as a cofactor.

The protein resides in the nucleus. It catalyses the reaction ATP + (deoxyribonucleotide)n-3'-hydroxyl + 5'-phospho-(deoxyribonucleotide)m = (deoxyribonucleotide)n+m + AMP + diphosphate.. Functionally, DNA ligase involved in DNA non-homologous end joining (NHEJ); required for double-strand break (DSB) repair. The protein is DNA ligase 4 (LIG4) of Candida glabrata (strain ATCC 2001 / BCRC 20586 / JCM 3761 / NBRC 0622 / NRRL Y-65 / CBS 138) (Yeast).